Consider the following 122-residue polypeptide: Large ribosomal subunit protein uL18 (122 aa).

A disordered region spans residues 1-24; it reads MLKKADKNANRLQRHKRVRRKISG. The segment covering 12–22 has biased composition (basic residues); the sequence is LQRHKRVRRKI.

It belongs to the universal ribosomal protein uL18 family. In terms of assembly, part of the 50S ribosomal subunit; part of the 5S rRNA/L5/L18/L25 subcomplex. Contacts the 5S and 23S rRNAs.

Functionally, this is one of the proteins that bind and probably mediate the attachment of the 5S RNA into the large ribosomal subunit, where it forms part of the central protuberance. This is Large ribosomal subunit protein uL18 from Clostridioides difficile (strain 630) (Peptoclostridium difficile).